We begin with the raw amino-acid sequence, 142 residues long: Large ribosomal subunit protein uL11 (142 aa).

The protein belongs to the universal ribosomal protein uL11 family. Part of the ribosomal stalk of the 50S ribosomal subunit. Interacts with L10 and the large rRNA to form the base of the stalk. L10 forms an elongated spine to which L12 dimers bind in a sequential fashion forming a multimeric L10(L12)X complex. In terms of processing, one or more lysine residues are methylated.

In terms of biological role, forms part of the ribosomal stalk which helps the ribosome interact with GTP-bound translation factors. The polypeptide is Large ribosomal subunit protein uL11 (Rhizobium meliloti (strain 1021) (Ensifer meliloti)).